A 393-amino-acid chain; its full sequence is Phosphoglycerate kinase (393 aa).

Substrate contacts are provided by residues Asp21–Asn23, Arg37, His60–Arg63, Arg115, and Arg148. Residues Lys199, Glu321, and Gly347–Thr350 each bind ATP.

The protein belongs to the phosphoglycerate kinase family. As to quaternary structure, monomer.

It is found in the cytoplasm. It catalyses the reaction (2R)-3-phosphoglycerate + ATP = (2R)-3-phospho-glyceroyl phosphate + ADP. It participates in carbohydrate degradation; glycolysis; pyruvate from D-glyceraldehyde 3-phosphate: step 2/5. The sequence is that of Phosphoglycerate kinase from Dechloromonas aromatica (strain RCB).